We begin with the raw amino-acid sequence, 399 residues long: MAESVFAERIVQNLLDTDFYKLTMMQAVLHNYPNAEVEWEFRCRNAEDLRPYLAEIRYQIERLAEVEVTADQLAFLERIPFMKPDFIRFLSLFRFNLRYVHTGIEDGQLAIRLRGPWLHVILFEVPLLAIVSEVRNRYRYREVVLEQVGEQLYRKLDWLSAQASSEELAEFQVADFGTRRRFSYRTQEEVVHILKRDFPGRFVGTSNVHLAREYDLKPIGTMAHEWLMAHQQLGPRLVDSQQAALDCWVREYRGQLGIALTDCITMDAFLDDFDLYFAKLFDGLRHDSGDPLAWAEKAIAHYRRLGIDPLSKTLVFSDGLDMPKALQLFRALRGKINVSFGIGTNLTCDIPGVEPMNIVLKMTACNGHPVAKISDAPGKTQCRDENFVAYLRHVFNVPA.

The residue at position 224 (histidine 224) is a Phosphohistidine; by autocatalysis.

Belongs to the NAPRTase family. In terms of processing, transiently phosphorylated on a His residue during the reaction cycle. Phosphorylation strongly increases the affinity for substrates and increases the rate of nicotinate D-ribonucleotide production. Dephosphorylation regenerates the low-affinity form of the enzyme, leading to product release.

It catalyses the reaction nicotinate + 5-phospho-alpha-D-ribose 1-diphosphate + ATP + H2O = nicotinate beta-D-ribonucleotide + ADP + phosphate + diphosphate. The protein operates within cofactor biosynthesis; NAD(+) biosynthesis; nicotinate D-ribonucleotide from nicotinate: step 1/1. Its function is as follows. Catalyzes the synthesis of beta-nicotinate D-ribonucleotide from nicotinate and 5-phospho-D-ribose 1-phosphate at the expense of ATP. The protein is Nicotinate phosphoribosyltransferase 1 of Pseudomonas aeruginosa (strain ATCC 15692 / DSM 22644 / CIP 104116 / JCM 14847 / LMG 12228 / 1C / PRS 101 / PAO1).